The following is a 57-amino-acid chain: Protein translocase subunit SecE (57 aa).

The helical transmembrane segment at 33–53 (GLGILLVGFIGFVIFSIMTFV) threads the bilayer.

Belongs to the SecE/SEC61-gamma family. Component of the Sec protein translocase complex. Heterotrimer consisting of SecY (alpha), SecG (beta) and SecE (gamma) subunits. The heterotrimers can form oligomers, although 1 heterotrimer is thought to be able to translocate proteins. Interacts with the ribosome. May interact with SecDF, and other proteins may be involved.

The protein resides in the cell membrane. Essential subunit of the Sec protein translocation channel SecYEG. Clamps together the 2 halves of SecY. May contact the channel plug during translocation. This is Protein translocase subunit SecE from Natronomonas pharaonis (strain ATCC 35678 / DSM 2160 / CIP 103997 / JCM 8858 / NBRC 14720 / NCIMB 2260 / Gabara) (Halobacterium pharaonis).